A 520-amino-acid polypeptide reads, in one-letter code: BBSome complex member BBS4 (520 aa).

The tract at residues 1–26 is disordered; the sequence is MAEVKLGMKTQVPASVESQKPRSKKA. Residues 1–66 are required for localization to centrosomes; the sequence is MAEVKLGMKT…EQLQETQGLC (66 aa). TPR repeat units lie at residues 67-100, 102-134, 135-167, 168-201, 203-235, 237-269, 270-303, 304-337, 339-371, and 373-408; these read EYAI…SPQC, DNLK…NQKD, WEIC…LNKH, DLTY…SPEN, ELLT…DPAN, KAIL…IPES, PPLW…APFD, WKIL…QPKM, ELYM…DKCN, and LVNL…LKDN. Residues 101–337 are interaction with PCM1; it reads ADNLKQVARS…SAAINFQPKM (237 aa). The tract at residues 338–520 is required for localization to centrosomes; it reads GELYMLLAVA…TEASEQKKEK (183 aa). The segment at 488–520 is disordered; sequence AQLPKPPSLPLEPEPEPTVEASPTEASEQKKEK.

It belongs to the BBS4 family. As to quaternary structure, part of BBSome complex, that contains BBS1, BBS2, BBS4, BBS5, BBS7, BBS8/TTC8, BBS9 and BBIP10. Interacts with PCM1 and DCTN1. Interacts with DC28B. Interacts with ALDOB and C2CD3. Interacts with PKD1. Interacts with CEP290. Interacts with DLEC1. In terms of tissue distribution, expressed in the hippocampus and dentate gyrus, the columnar epithelial cells of bronchioles, the olfactory epithelium and the inner segment and outer nuclear layer of the retina. Expressed in testis.

It localises to the cytoplasm. It is found in the cytoskeleton. The protein resides in the microtubule organizing center. The protein localises to the centrosome. Its subcellular location is the cell projection. It localises to the cilium membrane. It is found in the centriolar satellite. The protein resides in the cilium. The protein localises to the flagellum. The BBSome complex is thought to function as a coat complex required for sorting of specific membrane proteins to the primary cilia. The BBSome complex is required for ciliogenesis but is dispensable for centriolar satellite function. This ciliogenic function is mediated in part by the Rab8 GDP/GTP exchange factor, which localizes to the basal body and contacts the BBSome. Rab8(GTP) enters the primary cilium and promotes extension of the ciliary membrane. Firstly the BBSome associates with the ciliary membrane and binds to RAB3IP/Rabin8, the guanosyl exchange factor (GEF) for Rab8 and then the Rab8-GTP localizes to the cilium and promotes docking and fusion of carrier vesicles to the base of the ciliary membrane. The BBSome complex, together with the LTZL1, controls SMO ciliary trafficking and contributes to the sonic hedgehog (SHH) pathway regulation. Required for proper BBSome complex assembly and its ciliary localization. Required for microtubule anchoring at the centrosome but not for microtubule nucleation. May be required for the dynein-mediated transport of pericentriolar proteins to the centrosome. The protein is BBSome complex member BBS4 (Bbs4) of Mus musculus (Mouse).